Consider the following 81-residue polypeptide: Antitoxin VapB28 (81 aa).

Its function is as follows. Antitoxin component of a type II toxin-antitoxin (TA) system. In Mycobacterium tuberculosis (strain CDC 1551 / Oshkosh), this protein is Antitoxin VapB28 (vapB28).